A 67-amino-acid chain; its full sequence is Alpha-toxin Cn12 (67 aa).

Residues 1-66 (RDGYPLASNG…WGDSGTGPCR (66 aa)) form the LCN-type CS-alpha/beta domain. 4 cysteine pairs are disulfide-bonded: cysteine 11–cysteine 65, cysteine 15–cysteine 40, cysteine 25–cysteine 45, and cysteine 29–cysteine 47.

As to expression, expressed by the venom gland.

Its subcellular location is the secreted. Functionally, alpha toxins bind voltage-independently at site-3 of sodium channels (Nav) and inhibit the inactivation of the activated channels, thereby blocking neuronal transmission. This toxin binds, in vitro, to sodium channels and inhibits the inactivation of the activated channels. Seems not toxic to mice, crickets and sweet-water shrimps. In Centruroides noxius (Mexican scorpion), this protein is Alpha-toxin Cn12.